Consider the following 576-residue polypeptide: Calcium-dependent protein kinase 11 (576 aa).

Glycine 2 carries N-myristoyl glycine lipidation. A disordered region spans residues proline 27–arginine 88. Positions alanine 41–glutamate 56 are enriched in low complexity. Positions tyrosine 113–valine 371 constitute a Protein kinase domain. ATP-binding positions include leucine 119–threonine 127 and lysine 142. Residue aspartate 237 is the Proton acceptor of the active site. The interval alanine 377 to isoleucine 407 is autoinhibitory domain. 4 consecutive EF-hand domains span residues glutamate 414 to asparagine 449, leucine 450 to valine 485, glutamate 486 to glycine 521, and aspartate 522 to alanine 555. Ca(2+) contacts are provided by aspartate 427, aspartate 429, serine 431, histidine 433, glutamate 438, aspartate 463, aspartate 465, serine 467, threonine 469, glutamate 474, aspartate 499, aspartate 501, serine 503, tyrosine 505, glutamate 510, aspartate 533, aspartate 535, aspartate 537, arginine 539, and glutamate 544.

It belongs to the protein kinase superfamily. Ser/Thr protein kinase family. CDPK subfamily.

Its subcellular location is the membrane. It carries out the reaction L-seryl-[protein] + ATP = O-phospho-L-seryl-[protein] + ADP + H(+). It catalyses the reaction L-threonyl-[protein] + ATP = O-phospho-L-threonyl-[protein] + ADP + H(+). With respect to regulation, activated by calcium. Autophosphorylation may play an important role in the regulation of the kinase activity. Functionally, may play a role in signal transduction pathways that involve calcium as a second messenger. The chain is Calcium-dependent protein kinase 11 from Oryza sativa subsp. japonica (Rice).